Reading from the N-terminus, the 183-residue chain is dCTP deaminase (183 aa).

106–111 (KSTYAR) lines the dCTP pocket. The active-site Proton donor/acceptor is Glu-132. DCTP is bound by residues Gln-151, Tyr-165, and Gln-175.

The protein belongs to the dCTP deaminase family. In terms of assembly, homotrimer.

It catalyses the reaction dCTP + H2O + H(+) = dUTP + NH4(+). Its pathway is pyrimidine metabolism; dUMP biosynthesis; dUMP from dCTP (dUTP route): step 1/2. In terms of biological role, catalyzes the deamination of dCTP to dUTP. In Gluconobacter oxydans (strain 621H) (Gluconobacter suboxydans), this protein is dCTP deaminase.